The following is a 457-amino-acid chain: Putative methyltransferase MT1451 (457 aa).

S-adenosyl-L-methionine is bound by residues 276–282, Glu-301, Asp-325, and Asp-341; that span reads CAGPGGK. The Nucleophile role is filled by Cys-394.

Belongs to the class I-like SAM-binding methyltransferase superfamily. RsmB/NOP family.

Functionally, may act as RNA methyltransferase. The chain is Putative methyltransferase MT1451 from Mycobacterium tuberculosis (strain CDC 1551 / Oshkosh).